The following is a 336-amino-acid chain: MTIKVAINGYGRIGRNVLRAHYEGGKRHDLEIVAINDLGNAATNAHLTQYDTVHGRFPGEVSVDGDAFRVNGDRIRVLAQRNPAELPWGELGVDVVMECTGLFTSKEKASAHLKGGAKKVIISAPGGKDVDATIVYGVNHGVLKATDTVISNASCTTNCLAPLVKPLHEKLGVVNGLMTTVHSYTNDQVLTDVYHEDLRRARSATMSMIPTKTGAAAAVGLVMPELDGRLDGFAVRVPTINVSLVDLSFVAARPTTVEEVNGILKAAAEGELKGILDYNTAPLVSVDFNHNPASSTFDATLTKVNGTLVKVSAWYDNEWGFSNRMLDTAVALAHAR.

NAD(+)-binding positions include 12–13 (RI), aspartate 37, arginine 81, and serine 123. Residues 154–156 (SCT) and threonine 185 each bind D-glyceraldehyde 3-phosphate. The active-site Nucleophile is the cysteine 155. Asparagine 186 contributes to the NAD(+) binding site. Residues arginine 200, 213-214 (TG), and arginine 236 contribute to the D-glyceraldehyde 3-phosphate site. Asparagine 317 contributes to the NAD(+) binding site.

Belongs to the glyceraldehyde-3-phosphate dehydrogenase family. As to quaternary structure, homotetramer.

The enzyme catalyses D-glyceraldehyde 3-phosphate + phosphate + NAD(+) = (2R)-3-phospho-glyceroyl phosphate + NADH + H(+). Its pathway is carbohydrate biosynthesis; Calvin cycle. Could be involved in carbon fixation as a component of the Calvin cycle. Catalyzes the oxidative phosphorylation of glyceraldehyde 3-phosphate (G3P) to 1,3-bisphosphoglycerate (BPG) using the cofactor NAD. The first reaction step involves the formation of a hemiacetal intermediate between G3P and a cysteine residue, and this hemiacetal intermediate is then oxidized to a thioester, with concomitant reduction of NAD to NADH. The reduced NADH is then exchanged with the second NAD, and the thioester is attacked by a nucleophilic inorganic phosphate to produce BPG. The protein is Glyceraldehyde-3-phosphate dehydrogenase, plasmid (cbbGP) of Cupriavidus necator (strain ATCC 17699 / DSM 428 / KCTC 22496 / NCIMB 10442 / H16 / Stanier 337) (Ralstonia eutropha).